Consider the following 27-residue polypeptide: HVVAAITALKERGGSSHQALKKYKAAN.

The H15 domain maps to 1 to 27 (HVVAAITALKERGGSSHQALKKYKAAN).

The protein belongs to the histone H1/H5 family.

The protein resides in the nucleus. The protein localises to the chromosome. Functionally, histones H1 are necessary for the condensation of nucleosome chains into higher-order structures. The polypeptide is Histone H1.3, embryonic (Parechinus angulosus (Angulate sea urchin)).